The following is a 423-amino-acid chain: Histidine--tRNA ligase (423 aa).

It belongs to the class-II aminoacyl-tRNA synthetase family. As to quaternary structure, homodimer.

It is found in the cytoplasm. It carries out the reaction tRNA(His) + L-histidine + ATP = L-histidyl-tRNA(His) + AMP + diphosphate + H(+). In Rhodococcus erythropolis (strain PR4 / NBRC 100887), this protein is Histidine--tRNA ligase.